A 308-amino-acid polypeptide reads, in one-letter code: Adult enhancer factor 1 (308 aa).

2 disordered regions span residues alanine 50–phenylalanine 94 and glutamine 123–threonine 143. Positions glutamine 56–glutamine 76 are enriched in low complexity. Positions proline 81–leucine 90 are enriched in pro residues. C2H2-type zinc fingers lie at residues phenylalanine 184–histidine 206, tyrosine 212–histidine 234, tyrosine 240–histidine 262, and phenylalanine 268–histidine 290.

In terms of tissue distribution, found in all tissues examined including the ovary and the fat body.

It is found in the nucleus. Functionally, transcriptional repressor that binds specifically to fat body-specific enhancers, namely the adult ADH enhancer (AAE) and the enhancer that controls yolk protein gene expression. This chain is Adult enhancer factor 1 (Aef1), found in Drosophila melanogaster (Fruit fly).